Here is a 446-residue protein sequence, read N- to C-terminus: Branched-chain amino acid permease BrnQ (446 aa).

Transmembrane regions (helical) follow at residues 13 to 33, 41 to 61, 81 to 101, 120 to 140, 154 to 174, 196 to 216, 237 to 257, 285 to 305, 325 to 345, 347 to 367, 381 to 401, and 421 to 441; these read ISSM…PAYL, LWIS…LAIA, KYSY…FAIP, MAKS…MLFF, FLTP…LLHP, VLAG…IIVI, TGVL…LVGA, GAVI…IGLI, WAII…TTII, FSLP…LLAL, IMTA…LPAG, and GLGW…KGVI.

The protein belongs to the branched chain amino acid transporter family.

The protein resides in the cell membrane. Its activity is regulated as follows. Leucine uptake is inhibited by the proton ionophore carbonyl cyanide m-chlorophenylhydrazone (CCCP). In terms of biological role, branched chain amino acid transport system which is involved in the uptake of leucine, valine and isoleucine. The proton motive force is probably the driving force for transport. This Lactobacillus delbrueckii subsp. lactis protein is Branched-chain amino acid permease BrnQ.